Reading from the N-terminus, the 109-residue chain is Fluoride-specific ion channel FluC 1 (109 aa).

Transmembrane regions (helical) follow at residues 21-41 (LFIN…GFFI), 52-72 (IILS…YFLY), and 84-104 (IIFC…GFWI).

It belongs to the fluoride channel Fluc/FEX (TC 1.A.43) family.

The protein localises to the cell inner membrane. The catalysed reaction is fluoride(in) = fluoride(out). In terms of biological role, fluoride-specific ion channel. Important for reducing fluoride concentration in the cell, thus reducing its toxicity. The sequence is that of Fluoride-specific ion channel FluC 1 from Prochlorococcus marinus (strain MIT 9312).